Here is a 260-residue protein sequence, read N- to C-terminus: Flagellar basal-body rod protein FlgG (260 aa).

The protein belongs to the flagella basal body rod proteins family. As to quaternary structure, the basal body constitutes a major portion of the flagellar organelle and consists of four rings (L,P,S, and M) mounted on a central rod. The rod consists of about 26 subunits of FlgG in the distal portion, and FlgB, FlgC and FlgF are thought to build up the proximal portion of the rod with about 6 subunits each.

The protein localises to the bacterial flagellum basal body. The sequence is that of Flagellar basal-body rod protein FlgG (flgG) from Salmonella typhi.